Reading from the N-terminus, the 311-residue chain is CD-NTase-associated protein 6 (311 aa).

ATP contacts are provided by residues 84–89 (GSGKTE) and 215–216 (RR).

The protein belongs to the AAA ATPase family. As to quaternary structure, homohexamer. Forms a 1:1:6 CdnC:Cap7:Cap6 complex.

In terms of biological role, regulates complex assembly in a CBASS antivirus system. CBASS (cyclic oligonucleotide-based antiphage signaling system) provides immunity against bacteriophage. The CD-NTase protein synthesizes cyclic nucleotides in response to infection; these serve as specific second messenger signals. The signals activate a diverse range of effectors, leading to bacterial cell death and thus abortive phage infection. A type III-C(AAA) CBASS system. Functionally, binds and disassembles an active CdnC:Cap7 (Cap7 is also called HORMA) complex, inhibiting the complex's ability to synthesize cyclic nucleotide second messengers. An AAA+-ATPase remodeler, in the absence of foreign threat Cap6 (also called Trip13) probably maintains the Cap7 protein in its open, inactive state. Once activated (presumably by a bacteriophage protein) Cap7 binds to and activates its cognate CD-NTase (CdnC in this bacteria) to synthesize cAAA, a cyclic nucleotide second messenger. cAAA activates the NucC endonuclease which degrades all DNA in the infected cell, causing cell death and abortive phage infection. Its function is as follows. Protects E.coli strain JP313 against bacteriophage lambda cI- infection. When the cdnC-cap7-cap6-nucC operon is transformed into a susceptible E.coli strain it confers bacteriophage lambda cI- immunity. Mutations in the sensor (Cap7 also called HORMA) or effector proteins (CdnC, NucC) but not the disassembly protein (Cap6 also called Trip13) no longer confer immunity. The presence of the intact operon leads to culture collapse and cell death, which occurs before the phage has finished its replication cycle, thus protecting non-infected bacteria by aborting the phage infection and preventing its propagation. The protein is CD-NTase-associated protein 6 of Escherichia coli (strain MS 115-1).